A 174-amino-acid chain; its full sequence is Adenylosuccinate synthetase (174 aa).

GTP contacts are provided by residues 13–19 (GDEGKGK) and 41–43 (GHT). Aspartate 14 functions as the Proton acceptor in the catalytic mechanism. 2 residues coordinate Mg(2+): aspartate 14 and glycine 41. IMP-binding positions include 14 to 17 (DEGK), 39 to 42 (NAGH), threonine 130, and arginine 144. Histidine 42 functions as the Proton donor in the catalytic mechanism.

It belongs to the adenylosuccinate synthetase family. In terms of assembly, homodimer. Mg(2+) serves as cofactor.

It localises to the cytoplasm. It catalyses the reaction IMP + L-aspartate + GTP = N(6)-(1,2-dicarboxyethyl)-AMP + GDP + phosphate + 2 H(+). It functions in the pathway purine metabolism; AMP biosynthesis via de novo pathway; AMP from IMP: step 1/2. Functionally, plays an important role in the de novo pathway of purine nucleotide biosynthesis. Catalyzes the first committed step in the biosynthesis of AMP from IMP. The chain is Adenylosuccinate synthetase from Stutzerimonas stutzeri (Pseudomonas stutzeri).